The following is a 609-amino-acid chain: Albumin (609 aa).

An N-terminal signal peptide occupies residues 1–18 (MKWVTFISLLFLFSSAYS). Residues 19–24 (RGVFRR) constitute a propeptide that is removed on maturation. Albumin domains are found at residues 19-210 (RGVF…DELR), 211-403 (DEGK…EFKP), and 404-601 (LVEE…KLVA). Histidine 27 contributes to the Cu cation binding site. Phosphoserine is present on serine 29. Residues glutamate 30 and aspartate 37 each contribute to the Ca(2+) site. A disulfide bridge links cysteine 77 with cysteine 86. Phosphoserine is present on residues serine 82 and serine 89. Histidine 91 contributes to the Zn(2+) binding site. Disulfide bonds link cysteine 99–cysteine 115, cysteine 114–cysteine 125, cysteine 148–cysteine 193, cysteine 192–cysteine 201, cysteine 224–cysteine 270, and cysteine 269–cysteine 277. Threonine 107 carries the post-translational modification Phosphothreonine. Residue lysine 229 is modified to N6-succinyllysine. Position 264 (lysine 264) interacts with (4Z,15Z)-bilirubin IXalpha. A Ca(2+)-binding site is contributed by glutamate 268. Positions 271 and 273 each coordinate Zn(2+). Ca(2+) is bound by residues aspartate 273, glutamate 276, aspartate 279, and aspartate 283. 8 disulfide bridges follow: cysteine 289/cysteine 303, cysteine 302/cysteine 313, cysteine 340/cysteine 385, cysteine 384/cysteine 393, cysteine 416/cysteine 462, cysteine 461/cysteine 472, cysteine 485/cysteine 501, and cysteine 500/cysteine 511. At serine 297 the chain carries Phosphoserine. Serine 443 carries the phosphoserine modification. 2 positions are modified to phosphothreonine: threonine 444 and threonine 446. Position 460 is an N6-succinyllysine (lysine 460). Serine 513 carries the post-translational modification Phosphoserine. Intrachain disulfides connect cysteine 538/cysteine 583 and cysteine 582/cysteine 591. Lysine 543 bears the N6-succinyllysine mark. Lysine 558 is modified (N6-methyllysine). Position 570 is a phosphothreonine (threonine 570). Lysine 588 carries the post-translational modification N6-succinyllysine.

Belongs to the ALB/AFP/VDB family. As to quaternary structure, interacts with FCGRT; this interaction regulates ALB homeostasis. Interacts with TASOR. In plasma, occurs in a covalently-linked complex with chromophore-bound alpha-1-microglobulin; this interaction does not prevent fatty acid binding to ALB. Phosphorylated by FAM20C in the extracellular medium. In terms of tissue distribution, plasma.

The protein resides in the secreted. Binds water, Ca(2+), Na(+), K(+), fatty acids, hormones, bilirubin and drugs. Its main function is the regulation of the colloidal osmotic pressure of blood. Major zinc transporter in plasma, typically binds about 80% of all plasma zinc. Major calcium and magnesium transporter in plasma, binds approximately 45% of circulating calcium and magnesium in plasma. Potentially has more than two calcium-binding sites and might additionally bind calcium in a non-specific manner. The shared binding site between zinc and calcium at residue Asp-273 suggests a crosstalk between zinc and calcium transport in the blood. The rank order of affinity is zinc &gt; calcium &gt; magnesium. Binds to the bacterial siderophore enterobactin and inhibits enterobactin-mediated iron uptake of E.coli from ferric transferrin, and may thereby limit the utilization of iron and growth of enteric bacteria such as E.coli. Does not prevent iron uptake by the bacterial siderophore aerobactin. This is Albumin (ALB) from Pongo abelii (Sumatran orangutan).